The chain runs to 122 residues: Protein FLORAL ORGAN NUMBER2 (122 aa).

The signal sequence occupies residues 1-25 (MGRLFLCLVVAWCWVALLLVAPVHG). A disordered region spans residues 28-122 (GLPGEFSGDQ…PEHARSTGRP (95 aa)). The segment covering 54 to 63 (KQPRGVKGTR) has biased composition (basic residues). Low complexity predominate over residues 64 to 77 (RPSWSSWSSTASRS). The segment covering 111–122 (RRPEHARSTGRP) has biased composition (basic and acidic residues).

It belongs to the CLV3/ESR signal peptide family.

The protein resides in the secreted. Functionally, probable extracellular signal that regulates meristem maintenance. May function as a putative ligand for a receptor complex including FON1. Regulates the size of the floral meristem and the number of floral organs. In Oryza sativa subsp. indica (Rice), this protein is Protein FLORAL ORGAN NUMBER2 (FON2).